We begin with the raw amino-acid sequence, 260 residues long: Indole-3-glycerol phosphate synthase (260 aa).

This sequence belongs to the TrpC family.

It carries out the reaction 1-(2-carboxyphenylamino)-1-deoxy-D-ribulose 5-phosphate + H(+) = (1S,2R)-1-C-(indol-3-yl)glycerol 3-phosphate + CO2 + H2O. It participates in amino-acid biosynthesis; L-tryptophan biosynthesis; L-tryptophan from chorismate: step 4/5. This chain is Indole-3-glycerol phosphate synthase, found in Desulfotalea psychrophila (strain LSv54 / DSM 12343).